The chain runs to 198 residues: Recombination protein RecR (198 aa).

A C4-type zinc finger spans residues 58 to 73 (CSVCGNFTDTDPCAIC). Residues 81–175 (DIICVVEQPK…KVTRIAAGIP (95 aa)) form the Toprim domain.

This sequence belongs to the RecR family.

Functionally, may play a role in DNA repair. It seems to be involved in an RecBC-independent recombinational process of DNA repair. It may act with RecF and RecO. The chain is Recombination protein RecR from Clostridium perfringens (strain ATCC 13124 / DSM 756 / JCM 1290 / NCIMB 6125 / NCTC 8237 / Type A).